A 90-amino-acid polypeptide reads, in one-letter code: Cuticle protein 9.5 (90 aa).

In terms of biological role, component of the cuticle of migratory locust which contains more than 100 different structural proteins. This is Cuticle protein 9.5 from Locusta migratoria (Migratory locust).